Consider the following 317-residue polypeptide: DNA-3-methyladenine glycosylase (317 aa).

The tract at residues 1 to 76 is disordered; it reads SKEPVSVVLP…KEKLSSTPGL (76 aa). Residues 53-64 are compositionally biased toward low complexity; the sequence is KKQQLAQSEQQQ. 2 positions are modified to phosphoserine: S84 and S258.

The protein belongs to the DNA glycosylase MPG family. In terms of assembly, binds MBD1. Binds SSBP1.

Its subcellular location is the cytoplasm. It is found in the mitochondrion matrix. The protein resides in the mitochondrion nucleoid. It localises to the nucleus. The enzyme catalyses Hydrolysis of alkylated DNA, releasing 3-methyladenine, 3-methylguanine, 7-methylguanine and 7-methyladenine.. Binding to SSBP1 in mitochondria inhibits glycosylase activity in the context of a single-stranded DNA (ssDNA), but not a double-stranded DNA (dsDNA) substrates. Hydrolysis of the deoxyribose N-glycosidic bond to excise 3-methyladenine, and 7-methylguanine from the damaged DNA polymer formed by alkylation lesions. This is DNA-3-methyladenine glycosylase (Mpg) from Rattus norvegicus (Rat).